Reading from the N-terminus, the 208-residue chain is Uracil phosphoribosyltransferase (208 aa).

5-phospho-alpha-D-ribose 1-diphosphate is bound by residues Arg78, Arg103, and 130 to 138 (DPMLATGHS). Residues Ile193 and 198 to 200 (GDA) contribute to the uracil site. Asp199 is a binding site for 5-phospho-alpha-D-ribose 1-diphosphate.

This sequence belongs to the UPRTase family. Requires Mg(2+) as cofactor.

The catalysed reaction is UMP + diphosphate = 5-phospho-alpha-D-ribose 1-diphosphate + uracil. It participates in pyrimidine metabolism; UMP biosynthesis via salvage pathway; UMP from uracil: step 1/1. Its activity is regulated as follows. Allosterically activated by GTP. Catalyzes the conversion of uracil and 5-phospho-alpha-D-ribose 1-diphosphate (PRPP) to UMP and diphosphate. The polypeptide is Uracil phosphoribosyltransferase (Brucella anthropi (strain ATCC 49188 / DSM 6882 / CCUG 24695 / JCM 21032 / LMG 3331 / NBRC 15819 / NCTC 12168 / Alc 37) (Ochrobactrum anthropi)).